We begin with the raw amino-acid sequence, 517 residues long: Endoglucanase A (517 aa).

Positions 1–25 (MKRSLLKTCSIIAGATIIFSSLSIS) are cleaved as a signal peptide. The active-site Proton donor is Glu-185. Glu-309 (nucleophile) is an active-site residue. Residues 382–392 (HPEATEDDKPS) show a composition bias toward basic and acidic residues. The tract at residues 382–424 (HPEATEDDKPSTDVTNPDSGNTKPDSGNTNPGTETTTPTDNEK) is disordered. Over residues 393-407 (TDVTNPDSGNTKPDS) the composition is skewed to polar residues. Over residues 408–420 (GNTNPGTETTTPT) the composition is skewed to low complexity. The CBM2 domain occupies 416–517 (TTTPTDNEKI…VISNFEYKFD (102 aa)).

The protein belongs to the glycosyl hydrolase 5 (cellulase A) family.

It carries out the reaction Endohydrolysis of (1-&gt;4)-beta-D-glucosidic linkages in cellulose, lichenin and cereal beta-D-glucans.. In terms of biological role, hydrolyzes barley beta-glucan, lichenan, carboxymethylcellulose and xylan. It shows preferential activity against the larger cellooligosaccharides (cellohexaose and cellopentaose); cellotetraose is the smallest substrate degraded completely. This is Endoglucanase A (celA) from Clostridium longisporum.